We begin with the raw amino-acid sequence, 297 residues long: UDP-N-acetylenolpyruvoylglucosamine reductase (297 aa).

The FAD-binding PCMH-type domain occupies 26–191 (KSGGTADWLF…VAARFRGHPG (166 aa)). The active site involves Arg-171. The active-site Proton donor is Ser-220. The active site involves Glu-290.

This sequence belongs to the MurB family. FAD is required as a cofactor.

It localises to the cytoplasm. The catalysed reaction is UDP-N-acetyl-alpha-D-muramate + NADP(+) = UDP-N-acetyl-3-O-(1-carboxyvinyl)-alpha-D-glucosamine + NADPH + H(+). The protein operates within cell wall biogenesis; peptidoglycan biosynthesis. Functionally, cell wall formation. This Novosphingobium aromaticivorans (strain ATCC 700278 / DSM 12444 / CCUG 56034 / CIP 105152 / NBRC 16084 / F199) protein is UDP-N-acetylenolpyruvoylglucosamine reductase.